The sequence spans 79 residues: MDLKVVAVSFLLLVLCSEAAGYQLLTWEQANTAVKGVLDKVHSTGVEKLRDIYDKSVDAVGTYTSILTDQLYHWWCGEQ.

The N-terminal stretch at 1–21 is a signal peptide; that stretch reads MDLKVVAVSFLLLVLCSEAAG. The segment at 45 to 52 is lipid binding; that stretch reads GVEKLRDI. The interval 56–79 is lipoprotein lipase cofactor; it reads SVDAVGTYTSILTDQLYHWWCGEQ.

The protein belongs to the apolipoprotein C2 family. Post-translationally, proapolipoprotein C-II is synthesized as a sialic acid containing glycoprotein which is subsequently desialylated prior to its proteolytic processing. In terms of processing, proapolipoprotein C-II, the major form found in plasma undergoes proteolytic cleavage of its N-terminal hexapeptide to generate apolipoprotein C-II, which occurs as the minor form in plasma.

The protein resides in the secreted. Its function is as follows. Component of chylomicrons, very low-density lipoproteins (VLDL), low-density lipoproteins (LDL), and high-density lipoproteins (HDL) in plasma. Plays an important role in lipoprotein metabolism as an activator of lipoprotein lipase. Both proapolipoprotein C-II and apolipoprotein C-II can activate lipoprotein lipase. The protein is Apolipoprotein C-II (APOC2) of Alligator mississippiensis (American alligator).